A 314-amino-acid chain; its full sequence is Acetaldehyde dehydrogenase 1 (314 aa).

15 to 18 provides a ligand contact to NAD(+); sequence SGNI. The active-site Acyl-thioester intermediate is Cys-133. Residues 164-172 and Asn-291 each bind NAD(+); that span reads SAGPGTRAN.

The protein belongs to the acetaldehyde dehydrogenase family.

The enzyme catalyses acetaldehyde + NAD(+) + CoA = acetyl-CoA + NADH + H(+). This Paraburkholderia xenovorans (strain LB400) protein is Acetaldehyde dehydrogenase 1.